The chain runs to 158 residues: Snaclec mucetin subunit alpha (158 aa).

A signal peptide spans 1-23 (MGRFTFVSFGLLVVFLSLSGTGA). Intrachain disulfides connect cysteine 27/cysteine 38, cysteine 55/cysteine 152, and cysteine 127/cysteine 144. The C-type lectin domain maps to 34–153 (YDRYCYQAFS…CGRENPFVCK (120 aa)).

Belongs to the snaclec family. In terms of assembly, dimer and tetramer of heterodimers of alpha and beta subunits ((alphabeta)(2) and (alphabeta)(4)); disulfide-linked. These two multimeric forms are found. In terms of processing, the complex is glycosylated. Expressed by the venom gland.

The protein resides in the secreted. Potent platelet activator that acts via GPIb (GP1BA/GP1BB). After activation by the toxin, the receptor is redistributed on platelet surface thanks to cytoskeletal translocation. The indirect activation of integrin alpha-IIb/beta-3 (ITGA2B/ITGB3) also induced by the toxin is downstream the cytoskeletal translocation of GPIb. In Protobothrops mucrosquamatus (Taiwan habu), this protein is Snaclec mucetin subunit alpha.